The chain runs to 265 residues: Dehydrogenase RED2 (265 aa).

Residues 6–26 traverse the membrane as a helical segment; sequence SFLLSKLFLCIALCTAYVAFS. An N-linked (GlcNAc...) asparagine glycan is attached at N45. The chain crosses the membrane as a helical span at residues 47–67; it reads TSTVFGLTIVAIGLSALSSWL. Residue N74 is glycosylated (N-linked (GlcNAc...) asparagine). V89 is an NADP(+) binding site. N-linked (GlcNAc...) asparagine glycosylation is present at N127. Residues D136 and N163 each coordinate NADP(+). N-linked (GlcNAc...) asparagine glycosylation is present at N176. S216 serves as the catalytic Proton donor. Y228 and K232 together coordinate NADP(+). Catalysis depends on Y228, which acts as the Proton acceptor. Catalysis depends on K232, which acts as the Lowers pKa of active site Tyr.

The protein belongs to the short-chain dehydrogenases/reductases (SDR) family.

It localises to the membrane. The enzyme catalyses a primary alcohol + NAD(+) = an aldehyde + NADH + H(+). The catalysed reaction is a secondary alcohol + NAD(+) = a ketone + NADH + H(+). The protein operates within mycotoxin biosynthesis. Its function is as follows. Dehydrogenase; part of the Tox1B locus, one of the 2 loci that mediate the biosynthesis of T-toxin, a family of linear polyketides 37 to 45 carbons in length, of which the major component is 41 carbons, and which leads to high virulence to maize. One of the PKSs (PKS1 or PKS2) could synthesize a precursor, used subsequently by the other PKS as starter unit, to add additional carbons. Variability in the length of the final carbon backbone C35-47 could be achieved by varying the number of condensation cycles, or use of different starter or extender units or might be due to decarboxylation of the penultimate product, catalyzed by DEC1. Additional proteins are required for the biosynthesis of T-toxin, including oxidoreductases RED1, RED2, RED3, LAM1 and OXI1, as well as esterase TOX9. This Cochliobolus heterostrophus (strain C4 / ATCC 48331 / race T) (Southern corn leaf blight fungus) protein is Dehydrogenase RED2.